A 359-amino-acid polypeptide reads, in one-letter code: UDP-3-O-acylglucosamine N-acyltransferase (359 aa).

His-256 (proton acceptor) is an active-site residue.

It belongs to the transferase hexapeptide repeat family. LpxD subfamily. As to quaternary structure, homotrimer.

It catalyses the reaction a UDP-3-O-[(3R)-3-hydroxyacyl]-alpha-D-glucosamine + a (3R)-hydroxyacyl-[ACP] = a UDP-2-N,3-O-bis[(3R)-3-hydroxyacyl]-alpha-D-glucosamine + holo-[ACP] + H(+). Its pathway is bacterial outer membrane biogenesis; LPS lipid A biosynthesis. Catalyzes the N-acylation of UDP-3-O-acylglucosamine using 3-hydroxyacyl-ACP as the acyl donor. Is involved in the biosynthesis of lipid A, a phosphorylated glycolipid that anchors the lipopolysaccharide to the outer membrane of the cell. This is UDP-3-O-acylglucosamine N-acyltransferase from Rhodopseudomonas palustris (strain HaA2).